A 179-amino-acid polypeptide reads, in one-letter code: Large ribosomal subunit protein uL5 (179 aa).

This sequence belongs to the universal ribosomal protein uL5 family. As to quaternary structure, part of the 50S ribosomal subunit; part of the 5S rRNA/L5/L18/L25 subcomplex. Contacts the 5S rRNA and the P site tRNA. Forms a bridge to the 30S subunit in the 70S ribosome.

In terms of biological role, this is one of the proteins that bind and probably mediate the attachment of the 5S RNA into the large ribosomal subunit, where it forms part of the central protuberance. In the 70S ribosome it contacts protein S13 of the 30S subunit (bridge B1b), connecting the 2 subunits; this bridge is implicated in subunit movement. Contacts the P site tRNA; the 5S rRNA and some of its associated proteins might help stabilize positioning of ribosome-bound tRNAs. This chain is Large ribosomal subunit protein uL5, found in Stutzerimonas stutzeri (strain A1501) (Pseudomonas stutzeri).